The sequence spans 982 residues: Protein cramped (982 aa).

Disordered stretches follow at residues 1 to 37 (MEELSKQPPPPPLTQPPPPSSSVSIEEPLPNGKGGGA), 71 to 111 (QKMK…GSGK), 323 to 349 (SLPSAASNNNNNNNETEPLQPSVASLD), 407 to 456 (NKRL…SSGD), and 822 to 851 (GTSSAGISTSGSKPDCSMNAMTASQDQEPG). The span at 7 to 20 (QPPPPPLTQPPPPS) shows a compositional bias: pro residues. Positions 21–30 (SSVSIEEPLP) are enriched in low complexity. The segment covering 86–98 (SEREPNKKEEKAA) has biased composition (basic and acidic residues). The span at 100–111 (KTPSQLKTGSGK) shows a compositional bias: polar residues. The 65-residue stretch at 109–173 (SGKTTWTNVE…HYYQTHHKIC (65 aa)) folds into the SANT domain. Basic and acidic residues predominate over residues 410–425 (LRTESGSEKRSPETKK). Phosphoserine occurs at positions 431 and 437. Over residues 822 to 833 (GTSSAGISTSGS) the composition is skewed to low complexity.

This sequence belongs to the cramped family. Ubiquitously expressed throughout embryonic development. High expression is detected in CNS and gonads.

It is found in the nucleus. Polycomb group (Pc-G) genes are needed to maintain expression patterns of the homeotic selector genes of the Antennapedia (Antp-C) and Bithorax (Bx-C) complexes, and hence for the maintenance of segmental determination. Can act as a modifier of position effect variegation (PEV). The protein is Protein cramped (crm) of Drosophila melanogaster (Fruit fly).